Reading from the N-terminus, the 243-residue chain is Probable transcriptional regulatory protein LCA_1307 (243 aa).

Positions 1–21 (MSGHSKWHNIQGRKNAQDAKR) are disordered.

It belongs to the TACO1 family.

It is found in the cytoplasm. In Latilactobacillus sakei subsp. sakei (strain 23K) (Lactobacillus sakei subsp. sakei), this protein is Probable transcriptional regulatory protein LCA_1307.